Consider the following 268-residue polypeptide: Undecaprenyl-diphosphatase (268 aa).

7 consecutive transmembrane segments (helical) span residues 47–67 (FAILIQLGAILAIVALYFFKL), 83–103 (FIIGVLIAFLPAVIIGLIAGK), 109–129 (LFDPWVVCFSLIVGGAILLWV), 144–164 (YPLLMYLWIGVAQCLAMIPGV), 184–204 (AAEFSFFLAIPTMVGAFVYDF), 218–238 (LVAIGFVVSFITAMIVVKAFL), and 246–266 (FVLFAWWRVIVGTLGLIALAL).

It belongs to the UppP family.

The protein resides in the cell inner membrane. The catalysed reaction is di-trans,octa-cis-undecaprenyl diphosphate + H2O = di-trans,octa-cis-undecaprenyl phosphate + phosphate + H(+). Its function is as follows. Catalyzes the dephosphorylation of undecaprenyl diphosphate (UPP). Confers resistance to bacitracin. In Bradyrhizobium sp. (strain BTAi1 / ATCC BAA-1182), this protein is Undecaprenyl-diphosphatase.